Consider the following 643-residue polypeptide: Probable extracellular metalloproteinase 4 (643 aa).

A signal peptide spans 1 to 18 (MHGLLLAGLLALPLNVFA). Positions 19–254 (HPTESHSSGV…VHSVVDYVSA (236 aa)) are excised as a propeptide. Residues 49–69 (SDAVPKQDGESFTTSSTGDDN) are disordered. Positions 58-69 (ESFTTSSTGDDN) are enriched in polar residues. 2 N-linked (GlcNAc...) asparagine glycosylation sites follow: N271 and N420. H437 provides a ligand contact to Zn(2+). Residue E438 is part of the active site. H441 contributes to the Zn(2+) binding site. Residues N603 and N629 are each glycosylated (N-linked (GlcNAc...) asparagine).

It belongs to the peptidase M36 family. Zn(2+) serves as cofactor.

The protein resides in the secreted. Its function is as follows. Secreted metalloproteinase probably acting as a virulence factor. The sequence is that of Probable extracellular metalloproteinase 4 (MEP4) from Trichophyton verrucosum (strain HKI 0517).